The primary structure comprises 448 residues: TRAF family member-associated NF-kappa-B activator (448 aa).

Residues 35–65 are necessary for interaction with ZC3H12A; sequence MDKNIGEQLNRAYEAFRQACMDRDSAVRELQ. A coiled-coil region spans residues 60 to 98; that stretch reads AVRELQQKQTENYEQRIREQQEQLSFQQNLIDRLKSQLL. Residues 105 to 224 are necessary for interaction with TRAF6; the sequence is DNSYGYVPLL…QCTDKTEKQE (120 aa). The segment at 166-205 is interaction with TBK1 and IKBKE; sequence HERDNIEKTFWDLKEEFHRICLLAKAQKDHLSKLNIPDIA. The tract at residues 205–224 is TRAF family member interaction; it reads ATDTQCSVPIQCTDKTEKQE. Residue serine 211 is modified to Phosphoserine. Threonine 246 carries the phosphothreonine modification. Serine 258, serine 261, serine 377, and serine 380 each carry phosphoserine. The UBZ1-type zinc finger occupies 416–443; that stretch reads PLVCEFCQELFPPSITSRGDFLRHLNTH. Cysteine 419, cysteine 422, histidine 439, and histidine 443 together coordinate Zn(2+).

In terms of assembly, homodimer. Found in a deubiquitination complex with TANK, USP10 and ZC3H12A; this complex inhibits genotoxic stress- or interleukin-1-beta-mediated NF-kappaB activation by promoting IKBKG or TRAF6 deubiquitination. Interacts with IKBKG; this interaction increases in response to DNA damage. Interacts with TRAF6; this interaction increases in response to DNA damage and recruits USP10 to the ubiquitinated TRAF6. Interacts with USP10; this interaction increases in response to DNA damage. Interacts with TBK1 and IKBKE. Also interacts with TRAF1, TRAF2, and TRAF3 by binding to their TRAF-C domains; the interaction with TRAF2 is disrupted by the phosphorylation of TANK by IKBKE. Interacts more strongly with TRAF1 and TRAF2 than TRAF3. Part of a ternary complex consisting of TANK, IKBKB and IKBKG. Interacts with IKBKG; the interaction is enhanced by IKBKE and TBK1. As to expression, heart, brain, spleen, lung, liver, skeletal muscle, kidney and testis.

The protein resides in the cytoplasm. Its function is as follows. Adapter protein involved in I-kappa-B-kinase (IKK) regulation which constitutively binds TBK1 and IKBKE playing a role in antiviral innate immunity. Acts as a regulator of TRAF function by maintaining them in a latent state. Blocks TRAF2 binding to LMP1 and inhibits LMP1-mediated NF-kappa-B activation. Negatively regulates NF-kappaB signaling and cell survival upon DNA damage. Plays a role as an adapter to assemble ZC3H12A, USP10 in a deubiquitination complex which plays a negative feedback response to attenuate NF-kappaB activation through the deubiquitination of IKBKG or TRAF6 in response to interleukin-1-beta (IL1B) stimulation or upon DNA damage. Promotes UBP10-induced deubiquitination of TRAF6 in response to DNA damage. May control negatively TRAF2-mediated NF-kappa-B activation signaled by CD40, TNFR1 and TNFR2. Essential for the efficient induction of IRF-dependent transcription following infection with Sendai virus. This Mus musculus (Mouse) protein is TRAF family member-associated NF-kappa-B activator (Tank).